The chain runs to 55 residues: ATP synthase F(0) complex subunit 8 (55 aa).

A helical membrane pass occupies residues 4–24 (LNPAPWFTILVFSWMIFLAII). Residues 32–41 (TSPNDSSPLS) are compositionally biased toward polar residues. Residues 32 to 55 (TSPNDSSPLSTEKHKTESWDWPWQ) are disordered.

This sequence belongs to the ATPase protein 8 family. Component of the ATP synthase complex composed at least of ATP5F1A/subunit alpha, ATP5F1B/subunit beta, ATP5MC1/subunit c (homooctomer), MT-ATP6/subunit a, MT-ATP8/subunit 8, ATP5ME/subunit e, ATP5MF/subunit f, ATP5MG/subunit g, ATP5MK/subunit k, ATP5MJ/subunit j, ATP5F1C/subunit gamma, ATP5F1D/subunit delta, ATP5F1E/subunit epsilon, ATP5PF/subunit F6, ATP5PB/subunit b, ATP5PD/subunit d, ATP5PO/subunit OSCP. ATP synthase complex consists of a soluble F(1) head domain (subunits alpha(3) and beta(3)) - the catalytic core - and a membrane F(0) domain - the membrane proton channel (subunits c, a, 8, e, f, g, k and j). These two domains are linked by a central stalk (subunits gamma, delta, and epsilon) rotating inside the F1 region and a stationary peripheral stalk (subunits F6, b, d, and OSCP).

The protein localises to the mitochondrion membrane. Subunit 8, of the mitochondrial membrane ATP synthase complex (F(1)F(0) ATP synthase or Complex V) that produces ATP from ADP in the presence of a proton gradient across the membrane which is generated by electron transport complexes of the respiratory chain. ATP synthase complex consist of a soluble F(1) head domain - the catalytic core - and a membrane F(1) domain - the membrane proton channel. These two domains are linked by a central stalk rotating inside the F(1) region and a stationary peripheral stalk. During catalysis, ATP synthesis in the catalytic domain of F(1) is coupled via a rotary mechanism of the central stalk subunits to proton translocation. In vivo, can only synthesize ATP although its ATP hydrolase activity can be activated artificially in vitro. Part of the complex F(0) domain. This Formosania lacustris (Oriental stream loach) protein is ATP synthase F(0) complex subunit 8.